Consider the following 67-residue polypeptide: Large ribosomal subunit protein uL29 (67 aa).

The protein belongs to the universal ribosomal protein uL29 family.

In Clostridioides difficile (strain 630) (Peptoclostridium difficile), this protein is Large ribosomal subunit protein uL29.